Consider the following 196-residue polypeptide: Imidazoleglycerol-phosphate dehydratase (196 aa).

This sequence belongs to the imidazoleglycerol-phosphate dehydratase family.

The protein resides in the cytoplasm. The catalysed reaction is D-erythro-1-(imidazol-4-yl)glycerol 3-phosphate = 3-(imidazol-4-yl)-2-oxopropyl phosphate + H2O. It participates in amino-acid biosynthesis; L-histidine biosynthesis; L-histidine from 5-phospho-alpha-D-ribose 1-diphosphate: step 6/9. The sequence is that of Imidazoleglycerol-phosphate dehydratase from Ralstonia nicotianae (strain ATCC BAA-1114 / GMI1000) (Ralstonia solanacearum).